The sequence spans 236 residues: Translocon-associated protein subunit alpha (236 aa).

A signal peptide spans 1 to 20 (MNKLITLLLAVLMIISCVYS). Topologically, residues 21–163 (DDVEITDDEV…TEKETSFDMD (143 aa)) are lumenal. N-linked (GlcNAc...) asparagine glycosylation is found at N74, N94, N141, N148, and N152. Residues 164–184 (SFFLILLGLGFVGGIGYIVYG) traverse the membrane as a helical segment. The Cytoplasmic segment spans residues 185–236 (KMPKQKKVRTVSKVNKNAVRVETEDETAEWLSGTSAASSKVKSVQKVVKKNK).

It belongs to the TRAP-alpha family. As to quaternary structure, heterotrimer of TRAP-alpha, TRAP-beta and TRAP-gamma. In terms of processing, phosphorylated in its cytoplasmic tail.

Its subcellular location is the endoplasmic reticulum membrane. In terms of biological role, TRAP proteins are part of a complex whose function is to bind calcium to the ER membrane and thereby regulate the retention of ER resident proteins. This chain is Translocon-associated protein subunit alpha (ssr1), found in Dictyostelium discoideum (Social amoeba).